The sequence spans 620 residues: 1-deoxy-D-xylulose-5-phosphate synthase (620 aa).

Thiamine diphosphate contacts are provided by residues H80 and 121–123 (GHS). D152 serves as a coordination point for Mg(2+). Residues 153–154 (GA), N181, Y288, and E370 contribute to the thiamine diphosphate site. Position 181 (N181) interacts with Mg(2+).

Belongs to the transketolase family. DXPS subfamily. Homodimer. Mg(2+) is required as a cofactor. The cofactor is thiamine diphosphate.

It catalyses the reaction D-glyceraldehyde 3-phosphate + pyruvate + H(+) = 1-deoxy-D-xylulose 5-phosphate + CO2. Its pathway is metabolic intermediate biosynthesis; 1-deoxy-D-xylulose 5-phosphate biosynthesis; 1-deoxy-D-xylulose 5-phosphate from D-glyceraldehyde 3-phosphate and pyruvate: step 1/1. In terms of biological role, catalyzes the acyloin condensation reaction between C atoms 2 and 3 of pyruvate and glyceraldehyde 3-phosphate to yield 1-deoxy-D-xylulose-5-phosphate (DXP). The sequence is that of 1-deoxy-D-xylulose-5-phosphate synthase from Shigella sonnei (strain Ss046).